A 156-amino-acid chain; its full sequence is SPbeta prophage-derived uncharacterized protein YosH (156 aa).

The polypeptide is SPbeta prophage-derived uncharacterized protein YosH (yosH) (Bacillus subtilis (strain 168)).